A 218-amino-acid chain; its full sequence is Albicidin resistance protein (218 aa).

It is found in the periplasm. Functionally, albicidin resistance protein binds to form a complex without antibiotic activity but without catalyzing any further chemical modifications to albicidin. This Klebsiella oxytoca protein is Albicidin resistance protein.